Reading from the N-terminus, the 719-residue chain is Eukaryotic translation initiation factor 3 subunit B (719 aa).

In terms of domain architecture, RRM spans 60 to 147; sequence NILVVDNLPV…HIFAVNMFDD (88 aa). 3 WD repeats span residues 167–207, 511–553, and 555–598; these read VPGE…KPEL, LKGK…TMAS, and EHFM…LYRI. The segment covering 675-686 has biased composition (basic and acidic residues); the sequence is EKMERQKLRDGE. The disordered stretch occupies residues 675-698; sequence EKMERQKLRDGEASDEEEEYEAKE. Residues 687 to 698 show a composition bias toward acidic residues; sequence ASDEEEEYEAKE.

It belongs to the eIF-3 subunit B family. As to quaternary structure, component of the eukaryotic translation initiation factor 3 (eIF-3) complex.

The protein localises to the cytoplasm. Its function is as follows. RNA-binding component of the eukaryotic translation initiation factor 3 (eIF-3) complex, which is involved in protein synthesis of a specialized repertoire of mRNAs and, together with other initiation factors, stimulates binding of mRNA and methionyl-tRNAi to the 40S ribosome. The eIF-3 complex specifically targets and initiates translation of a subset of mRNAs involved in cell proliferation. This chain is Eukaryotic translation initiation factor 3 subunit B (TIF3B1), found in Nicotiana tabacum (Common tobacco).